Here is a 480-residue protein sequence, read N- to C-terminus: Probable E3 ubiquitin protein ligase DRIPH (480 aa).

The RING-type zinc-finger motif lies at 16 to 57 (CPICTNPFKDATTISECLHTFCRSCIRNKFINERVNACPVCN). 4 disordered regions span residues 93 to 133 (GPKT…EPAN), 167 to 193 (RGRKASLPKKIDSKPEPELPPKEPKIK), 241 to 261 (TPPDIVEPEISSDDDTEESVE), and 280 to 356 (VNQN…EMKV). Over residues 103-112 (SSKKKRKSRT) the composition is skewed to basic residues. A compositionally biased stretch (low complexity) spans 113 to 133 (SLRVSSSRVSSSPDTPLEPAN). Residues 175 to 193 (KKIDSKPEPELPPKEPKIK) are compositionally biased toward basic and acidic residues. Positions 246 to 260 (VEPEISSDDDTEESV) are enriched in acidic residues. A compositionally biased stretch (polar residues) spans 298-309 (GQKLKTNGAATS).

The enzyme catalyses S-ubiquitinyl-[E2 ubiquitin-conjugating enzyme]-L-cysteine + [acceptor protein]-L-lysine = [E2 ubiquitin-conjugating enzyme]-L-cysteine + N(6)-ubiquitinyl-[acceptor protein]-L-lysine.. It participates in protein modification; protein ubiquitination. This is Probable E3 ubiquitin protein ligase DRIPH from Arabidopsis thaliana (Mouse-ear cress).